The following is a 438-amino-acid chain: tRNA modification GTPase MnmE (438 aa).

Residues Arg20, Glu76, and Lys115 each coordinate (6S)-5-formyl-5,6,7,8-tetrahydrofolate. One can recognise a TrmE-type G domain in the interval 210–370 (NFTIMILGRR…LKCFINKIVD (161 aa)). Asn220 serves as a coordination point for K(+). GTP-binding positions include 220-225 (NVGKST), 239-245 (TNIPGTT), and 264-267 (DTAG). Ser224 contacts Mg(2+). Residues Thr239, Ile241, and Thr244 each contribute to the K(+) site. Thr245 provides a ligand contact to Mg(2+). Residue Lys438 coordinates (6S)-5-formyl-5,6,7,8-tetrahydrofolate.

Belongs to the TRAFAC class TrmE-Era-EngA-EngB-Septin-like GTPase superfamily. TrmE GTPase family. In terms of assembly, homodimer. Heterotetramer of two MnmE and two MnmG subunits. K(+) serves as cofactor.

Its subcellular location is the cytoplasm. Exhibits a very high intrinsic GTPase hydrolysis rate. Involved in the addition of a carboxymethylaminomethyl (cmnm) group at the wobble position (U34) of certain tRNAs, forming tRNA-cmnm(5)s(2)U34. In Carsonella ruddii (strain PV), this protein is tRNA modification GTPase MnmE.